Reading from the N-terminus, the 69-residue chain is DNA-directed RNA polymerase subunit omega (69 aa).

It belongs to the RNA polymerase subunit omega family. The RNAP catalytic core consists of 2 alpha, 1 beta, 1 beta' and 1 omega subunit. When a sigma factor is associated with the core the holoenzyme is formed, which can initiate transcription.

It carries out the reaction RNA(n) + a ribonucleoside 5'-triphosphate = RNA(n+1) + diphosphate. In terms of biological role, promotes RNA polymerase assembly. Latches the N- and C-terminal regions of the beta' subunit thereby facilitating its interaction with the beta and alpha subunits. The polypeptide is DNA-directed RNA polymerase subunit omega (Geotalea daltonii (strain DSM 22248 / JCM 15807 / FRC-32) (Geobacter daltonii)).